A 341-amino-acid chain; its full sequence is MAAKLISTGFRHTTLPENYVRPISDRPRLSEVSQLEDFPLIDLSSTDRSFLIQQIHQACARFGFFQVINHGVNKQIIDEMVSVAREFFSMSMEEKMKLYSDDPTKTTRLSTSFNVKKEEVNNWRDYLRLHCYPIHKYVNEWPSNPPSFKEIVSKYSREVREVGFKIEELISESLGLEKDYMKKVLGEQGQHMAVNYYPPCPEPELTYGLPAHTDPNALTILLQDTTVCGLQILIDGQWFAVNPHPDAFVINIGDQLQALSNGVYKSVWHRAVTNTENPRLSVASFLCPADCAVMSPAKPLWEAEDDETKPVYKDFTYAEYYKKFWSRNLDQEHCLENFLNN.

The Fe2OG dioxygenase domain occupies 188–288; sequence QGQHMAVNYY…RLSVASFLCP (101 aa). Positions 212, 214, and 269 each coordinate Fe cation. Residue Arg-279 coordinates 2-oxoglutarate.

It belongs to the iron/ascorbate-dependent oxidoreductase family. The cofactor is Fe(2+).

It carries out the reaction salicylate + NADH + O2 + H(+) = 2,3-dihydroxybenzoate + NAD(+) + H2O. Its function is as follows. Converts salicylic acid (SA) to 2,3-dihydroxybenzoic acid (2,3-DHBA). Suppressor of immunity. Regulates negatively defense associated genes expression (e.g. PR-1, PR-2, and PR-5). Negative regulator of defense against Hyaloperonospora arabidopsidis. (Microbial infection) Required for susceptibility to the downy mildew pathogen Hyaloperonospora arabidopsidis. Functionally, (Microbial infection) Required for susceptibility to Pseudomonas syringae pv. tomato DC3000. In terms of biological role, (Microbial infection) Required for susceptibility to the oomycete Phytophthora capsici. The polypeptide is Protein DOWNY MILDEW RESISTANCE 6 (Arabidopsis thaliana (Mouse-ear cress)).